We begin with the raw amino-acid sequence, 287 residues long: tRNA selenocysteine 1-associated protein 1 (287 aa).

2 consecutive RRM domains span residues 3 to 86 and 96 to 175; these read ASLW…YATY and YSLF…VAIP.

It belongs to the RRM TRSPAP family. As to quaternary structure, component of the tRNA(Sec) complex composed at least of EEFSEC, SECISBP2, SEPHS1, SEPSECS, TRNAU1AP and tRNA(Sec). Associates with mRNP and/or polysomes. Found in a complex with tRNA(Sec). Interacts with SEPSECS. As to expression, ubiquitous.

It localises to the nucleus. Its subcellular location is the cytoplasm. Functionally, involved in the early steps of selenocysteine biosynthesis and tRNA(Sec) charging to the later steps resulting in the cotranslational incorporation of selenocysteine into selenoproteins. Stabilizes the SECISBP2, EEFSEC and tRNA(Sec) complex. May be involved in the methylation of tRNA(Sec). Enhances efficiency of selenoproteins synthesis. This is tRNA selenocysteine 1-associated protein 1 (Trnau1ap) from Rattus norvegicus (Rat).